Here is a 562-residue protein sequence, read N- to C-terminus: Wee1-like protein kinase 2 (562 aa).

Disordered stretches follow at residues 1–86 (MRTA…DKGV) and 161–181 (YRQA…DDCS). Polar residues predominate over residues 35–48 (HSNQRGSPVNSWRA). One can recognise a Protein kinase domain in the interval 217–491 (FLEIEKIGAG…AKNSLLRRCV (275 aa)). ATP is bound by residues 223 to 231 (IGAGEFGSV) and Lys246. Catalysis depends on Asp344, which acts as the Proton acceptor. Mg(2+)-binding residues include Asn349 and Asp381. Residues 494–520 (AAQLQKQLNVEKFKTAMLERELKAAKL) are a coiled coil.

It belongs to the protein kinase superfamily. Ser/Thr protein kinase family. WEE1 subfamily.

It is found in the nucleus. The catalysed reaction is L-tyrosyl-[protein] + ATP = O-phospho-L-tyrosyl-[protein] + ADP + H(+). Oocyte-specific protein tyrosine kinase that phosphorylates and inhibits cdk1 and acts as a regulator of meiosis. Required to maintain meiotic arrest in oocytes by phosphorylating cdk1 at 'Tyr-15', leading to inhibit cdk1 activity and prevent meiotic reentry. In Xenopus tropicalis (Western clawed frog), this protein is Wee1-like protein kinase 2 (wee2).